Consider the following 330-residue polypeptide: Beta-ketoacyl-[acyl-carrier-protein] synthase III (330 aa).

Active-site residues include Cys-118 and His-257. The ACP-binding stretch occupies residues 258-262 (QANLR). The active site involves Asn-287.

It belongs to the thiolase-like superfamily. FabH family. Homodimer.

The protein resides in the cytoplasm. The enzyme catalyses malonyl-[ACP] + acetyl-CoA + H(+) = 3-oxobutanoyl-[ACP] + CO2 + CoA. Its pathway is lipid metabolism; fatty acid biosynthesis. Its function is as follows. Catalyzes the condensation reaction of fatty acid synthesis by the addition to an acyl acceptor of two carbons from malonyl-ACP. Catalyzes the first condensation reaction which initiates fatty acid synthesis and may therefore play a role in governing the total rate of fatty acid production. Possesses both acetoacetyl-ACP synthase and acetyl transacylase activities. Its substrate specificity determines the biosynthesis of branched-chain and/or straight-chain of fatty acids. The protein is Beta-ketoacyl-[acyl-carrier-protein] synthase III of Nitratidesulfovibrio vulgaris (strain DSM 19637 / Miyazaki F) (Desulfovibrio vulgaris).